Consider the following 583-residue polypeptide: Protein cps3 (583 aa).

2 C3H1-type zinc fingers span residues S35–E62 and A64–P91. 3 disordered regions span residues L318–T346, K471–T490, and R504–G532. Polar residues-rich tracts occupy residues K323–N334, N475–T490, and P513–G532.

The protein resides in the cytoplasm. Its function is as follows. Responsible for supersensitivity to the spindle poison, isopropyl N-3-chlorophenyl carbamate. Has a role in meiosis. This is Protein cps3 (cps3) from Schizosaccharomyces pombe (strain 972 / ATCC 24843) (Fission yeast).